Reading from the N-terminus, the 162-residue chain is Crossover junction endodeoxyribonuclease RuvC (162 aa).

Active-site residues include Asp8, Glu69, and His141. Positions 8, 69, and 141 each coordinate Mg(2+).

Belongs to the RuvC family. Homodimer which binds Holliday junction (HJ) DNA. The HJ becomes 2-fold symmetrical on binding to RuvC with unstacked arms; it has a different conformation from HJ DNA in complex with RuvA. In the full resolvosome a probable DNA-RuvA(4)-RuvB(12)-RuvC(2) complex forms which resolves the HJ. Mg(2+) serves as cofactor.

It is found in the cytoplasm. It catalyses the reaction Endonucleolytic cleavage at a junction such as a reciprocal single-stranded crossover between two homologous DNA duplexes (Holliday junction).. Functionally, the RuvA-RuvB-RuvC complex processes Holliday junction (HJ) DNA during genetic recombination and DNA repair. Endonuclease that resolves HJ intermediates. Cleaves cruciform DNA by making single-stranded nicks across the HJ at symmetrical positions within the homologous arms, yielding a 5'-phosphate and a 3'-hydroxyl group; requires a central core of homology in the junction. The consensus cleavage sequence is 5'-(A/T)TT(C/G)-3'. Cleavage occurs on the 3'-side of the TT dinucleotide at the point of strand exchange. HJ branch migration catalyzed by RuvA-RuvB allows RuvC to scan DNA until it finds its consensus sequence, where it cleaves and resolves the cruciform DNA. In Wolbachia pipientis wMel, this protein is Crossover junction endodeoxyribonuclease RuvC.